Consider the following 382-residue polypeptide: Mannitol-1-phosphate 5-dehydrogenase (382 aa).

3-14 (ALHFGAGNIGRG) is a binding site for NAD(+). An N6-acetyllysine modification is found at Lys269.

Belongs to the mannitol dehydrogenase family.

The enzyme catalyses D-mannitol 1-phosphate + NAD(+) = beta-D-fructose 6-phosphate + NADH + H(+). This chain is Mannitol-1-phosphate 5-dehydrogenase, found in Shigella sonnei (strain Ss046).